Reading from the N-terminus, the 129-residue chain is Lysozyme C-1/C-2 (129 aa).

Residues 1–129 (KVFERCELAR…VSSYVEGCTL (129 aa)) enclose the C-type lysozyme domain. 4 disulfides stabilise this stretch: Cys-6-Cys-127, Cys-30-Cys-115, Cys-65-Cys-81, and Cys-77-Cys-95. Active-site residues include Glu-35 and Asp-53.

This sequence belongs to the glycosyl hydrolase 22 family. Monomer.

It catalyses the reaction Hydrolysis of (1-&gt;4)-beta-linkages between N-acetylmuramic acid and N-acetyl-D-glucosamine residues in a peptidoglycan and between N-acetyl-D-glucosamine residues in chitodextrins.. Lysozymes have primarily a bacteriolytic function; those in tissues and body fluids are associated with the monocyte-macrophage system and enhance the activity of immunoagents. In Axis axis (Axis deer), this protein is Lysozyme C-1/C-2.